A 334-amino-acid polypeptide reads, in one-letter code: Beta-hexosaminidase (334 aa).

Substrate contacts are provided by residues Asp60, Arg68, Arg133, and 163–164 (KH). Residue His176 is the Proton donor/acceptor of the active site. Asp247 acts as the Nucleophile in catalysis.

Belongs to the glycosyl hydrolase 3 family. NagZ subfamily.

It is found in the cytoplasm. It catalyses the reaction Hydrolysis of terminal non-reducing N-acetyl-D-hexosamine residues in N-acetyl-beta-D-hexosaminides.. It participates in cell wall biogenesis; peptidoglycan recycling. Plays a role in peptidoglycan recycling by cleaving the terminal beta-1,4-linked N-acetylglucosamine (GlcNAc) from peptide-linked peptidoglycan fragments, giving rise to free GlcNAc, anhydro-N-acetylmuramic acid and anhydro-N-acetylmuramic acid-linked peptides. The sequence is that of Beta-hexosaminidase from Xanthomonas euvesicatoria pv. vesicatoria (strain 85-10) (Xanthomonas campestris pv. vesicatoria).